The following is a 330-amino-acid chain: Geranylgeranyl diphosphate synthase (330 aa).

Isopentenyl diphosphate-binding residues include K43, R46, and H75. D82 and D86 together coordinate Mg(2+). Residue R91 participates in an all-trans-polyprenyl diphosphate binding. Residue R92 coordinates isopentenyl diphosphate. Positions 175, 176, 213, 230, and 240 each coordinate an all-trans-polyprenyl diphosphate.

Belongs to the FPP/GGPP synthase family. Mg(2+) is required as a cofactor.

It catalyses the reaction isopentenyl diphosphate + (2E,6E)-farnesyl diphosphate = (2E,6E,10E)-geranylgeranyl diphosphate + diphosphate. It functions in the pathway isoprenoid biosynthesis; geranylgeranyl diphosphate biosynthesis; geranylgeranyl diphosphate from farnesyl diphosphate and isopentenyl diphosphate: step 1/1. Functionally, catalyzes the condensation of isopentenyl pyrophosphate with the allylic pyrophosphates to yield geranylgeranyl diphosphate (GGPP) which is a precursor of the ether-linked lipids. It is able to use dimethylallyl diphosphate (DMAPP), geranyl diphosphate (GPP), and (all-E)-geranyl diphosphate (E-FPP) as an allylic substrate. The polypeptide is Geranylgeranyl diphosphate synthase (gds) (Sulfolobus acidocaldarius (strain ATCC 33909 / DSM 639 / JCM 8929 / NBRC 15157 / NCIMB 11770)).